The primary structure comprises 363 residues: 3-isopropylmalate dehydrogenase (363 aa).

78–91 (GKKWDYLPIESRPE) contacts NAD(+). Arginine 99, arginine 109, arginine 138, and aspartate 227 together coordinate substrate. 3 residues coordinate Mg(2+): aspartate 227, aspartate 251, and aspartate 255. 285–297 (GSAPDIEGKNIAN) is a binding site for NAD(+).

This sequence belongs to the isocitrate and isopropylmalate dehydrogenases family. LeuB type 1 subfamily. Homodimer. The cofactor is Mg(2+). Mn(2+) serves as cofactor.

The protein localises to the cytoplasm. It carries out the reaction (2R,3S)-3-isopropylmalate + NAD(+) = 4-methyl-2-oxopentanoate + CO2 + NADH. Its pathway is amino-acid biosynthesis; L-leucine biosynthesis; L-leucine from 3-methyl-2-oxobutanoate: step 3/4. Catalyzes the oxidation of 3-carboxy-2-hydroxy-4-methylpentanoate (3-isopropylmalate) to 3-carboxy-4-methyl-2-oxopentanoate. The product decarboxylates to 4-methyl-2 oxopentanoate. This chain is 3-isopropylmalate dehydrogenase (leuB), found in Buchnera aphidicola subsp. Rhopalosiphum padi.